A 4960-amino-acid chain; its full sequence is Malformin synthetase mlfA (4960 aa).

Residues 194–564 are adenylation 1; it reads ERHATNRPHS…CGRADTQVKL (371 aa). The 74-residue stretch at 705-778 folds into the Carrier 1 domain; sequence SRLEQEVQLA…EAASLAEVQE (74 aa). At S739 the chain carries O-(pantetheine 4'-phosphoryl)serine. Residues 816 to 1247 form a condensation 1 region; sequence EDVFPCTTMQ…ALNTLSLLQA (432 aa). Positions 1275-1650 are adenylation 2; the sequence is DRWVTRQPEG…GRKDTQVKLR (376 aa). Positions 1777-1854 constitute a Carrier 2 domain; that stretch reads TPASELERTL…HLAAEVGEPA (78 aa). Disordered regions lie at residues 1855–1883 and 1917–1943; these read GQSA…NDGV and GGSS…KKNA. 2 stretches are compositionally biased toward low complexity: residues 1857–1881 and 1919–1936; these read SASS…STND and SSSN…SSSS. The segment at 1989-2404 is condensation 2; the sequence is EDIYPATALQ…AVSCSDKETL (416 aa). The adenylation 3 stretch occupies residues 2427–2819; that stretch reads RRTPHAPAVC…IGRRDGQLKL (393 aa). Residues 2955-3031 enclose the Carrier 3 domain; the sequence is RPVTSQEREM…QLICHINTIR (77 aa). The residue at position 2992 (S2992) is an O-(pantetheine 4'-phosphoryl)serine. Condensation stretches follow at residues 3049–3464 and 3520–3889; these read VALA…FTFP and SGYV…EQLV. Residues 3914–4304 form an adenylation 4 region; it reads HNSRQAVCAW…VGRKDNQIKF (391 aa). The 77-residue stretch at 4438 to 4514 folds into the Carrier 4 domain; sequence MPSTAAERKM…DLSDQAKSLI (77 aa). Residue S4475 is modified to O-(pantetheine 4'-phosphoryl)serine. The tract at residues 4551–4878 is condensation 5; it reads DVLPTTSFQH…LQTIVQHQNN (328 aa).

It belongs to the NRP synthetase family.

It functions in the pathway secondary metabolite biosynthesis. Nonribosomal peptide synthetase; part of the gene cluster that mediates the biosynthesis of malformins, cyclic pentapeptides with a disulfide bond between 2 consecutive cysteins, that show potential anti-tumor as well as antimalarial and antitrypanosomal properties. The nonribosomal peptide synthetase mlfA is responsible of the formation of the cyclic pentapeptide. The malformin biosynthesis clusters in malformin-producing fungi also contain enzymes involved in the formation of the disulfide bond between the two consecutive cysteins within malformins, in addition to additional tailoring enzymes such as methyltransferases or oxidoreductases. They are also composed of up to 4 major facilitator superfamily transporters, and transcription factors probably involved in the regulation of the expression of those clusters. The sequence is that of Malformin synthetase mlfA from Aspergillus neoniger (strain CBS 115656).